We begin with the raw amino-acid sequence, 460 residues long: MDSIVTTEDTIAAIASAISIGKGGVAIIRVSGKDAINSCKKIVQTKSKYAWESHRVFRGFIQENKQNKFIDEVLILVMKSPNSFTGEDVVELHCHGGIIIVNKVLKILLSNNSRVRLANPGEFSQRAFLNGKIDLTQAESINQLINASNARSAELAFSGVQGEIKKKIDDIKNDLINQLCEIEARVDFEEDFTDFDYTKYLKNIKKVKEKIELLIENAKRNSYIHNGISIALIGKTNVGKSSLLNLLAKKEKAIVTNIPGTTRDVIEVNLTINDIPMKIIDTAGIRETHEQIESIGIKKSFGKIKESDFIIYIYSLEEGFNEEDKKIIQEIPKEKLITILGNKKDLIDCKNINSNELKHTILMSIKNNDGERLLIDTIIKKCGLKQVENINIFLNDRHLTNLSACLSNLNDTDEIIENKLPFDLLSIELRDGIQNLSKITGQELTEELLDNIFSKFCIGK.

Residues Arg29, Glu91, and Lys132 each coordinate (6S)-5-formyl-5,6,7,8-tetrahydrofolate. Residues 227-383 (GISIALIGKT…LIDTIIKKCG (157 aa)) enclose the TrmE-type G domain. Asn237 lines the K(+) pocket. Residues 237–242 (NVGKSS), 256–262 (TNIPGTT), and 281–284 (DTAG) contribute to the GTP site. Ser241 contacts Mg(2+). 3 residues coordinate K(+): Thr256, Ile258, and Thr261. Mg(2+) is bound at residue Thr262. Lys460 provides a ligand contact to (6S)-5-formyl-5,6,7,8-tetrahydrofolate.

This sequence belongs to the TRAFAC class TrmE-Era-EngA-EngB-Septin-like GTPase superfamily. TrmE GTPase family. Homodimer. Heterotetramer of two MnmE and two MnmG subunits. It depends on K(+) as a cofactor.

It is found in the cytoplasm. Its function is as follows. Exhibits a very high intrinsic GTPase hydrolysis rate. Involved in the addition of a carboxymethylaminomethyl (cmnm) group at the wobble position (U34) of certain tRNAs, forming tRNA-cmnm(5)s(2)U34. This chain is tRNA modification GTPase MnmE, found in Prochlorococcus marinus (strain AS9601).